We begin with the raw amino-acid sequence, 161 residues long: Cytochrome c-type biogenesis protein CcmE (161 aa).

Residues 1–8 (MNARRKKR) are Cytoplasmic-facing. Residues 9–29 (LTLAVALIGGVAAIASLLLYA) form a helical; Signal-anchor for type II membrane protein membrane-spanning segment. Over 30–161 (LNSNLNLFYT…DYNEQQKTSY (132 aa)) the chain is Periplasmic. 2 residues coordinate heme: His-131 and Tyr-135.

This sequence belongs to the CcmE/CycJ family.

The protein localises to the cell inner membrane. Heme chaperone required for the biogenesis of c-type cytochromes. Transiently binds heme delivered by CcmC and transfers the heme to apo-cytochromes in a process facilitated by CcmF and CcmH. This Shewanella sediminis (strain HAW-EB3) protein is Cytochrome c-type biogenesis protein CcmE.